Here is a 184-residue protein sequence, read N- to C-terminus: ATP synthase subunit b, chloroplastic (184 aa).

A helical transmembrane segment spans residues 27 to 49; that stretch reads LATNLINLSVVLGVLIFFGKGVL.

It belongs to the ATPase B chain family. F-type ATPases have 2 components, F(1) - the catalytic core - and F(0) - the membrane proton channel. F(1) has five subunits: alpha(3), beta(3), gamma(1), delta(1), epsilon(1). F(0) has four main subunits: a(1), b(1), b'(1) and c(10-14). The alpha and beta chains form an alternating ring which encloses part of the gamma chain. F(1) is attached to F(0) by a central stalk formed by the gamma and epsilon chains, while a peripheral stalk is formed by the delta, b and b' chains.

The protein resides in the plastid. Its subcellular location is the chloroplast thylakoid membrane. In terms of biological role, f(1)F(0) ATP synthase produces ATP from ADP in the presence of a proton or sodium gradient. F-type ATPases consist of two structural domains, F(1) containing the extramembraneous catalytic core and F(0) containing the membrane proton channel, linked together by a central stalk and a peripheral stalk. During catalysis, ATP synthesis in the catalytic domain of F(1) is coupled via a rotary mechanism of the central stalk subunits to proton translocation. Functionally, component of the F(0) channel, it forms part of the peripheral stalk, linking F(1) to F(0). The sequence is that of ATP synthase subunit b, chloroplastic from Helianthus annuus (Common sunflower).